Here is a 366-residue protein sequence, read N- to C-terminus: Molybdopterin synthase catalytic subunit (366 aa).

Substrate-binding positions include 101-102 (HR), Lys-117, and 124-126 (KKE).

This sequence belongs to the MoaE family. MOCS2B subfamily. In terms of assembly, heterotetramer; composed of 2 small (Mocs2A) and 2 large (Mocs2B) subunits.

It is found in the cytoplasm. The catalysed reaction is 2 [molybdopterin-synthase sulfur-carrier protein]-C-terminal-Gly-aminoethanethioate + cyclic pyranopterin phosphate + H2O = molybdopterin + 2 [molybdopterin-synthase sulfur-carrier protein]-C-terminal Gly-Gly + 2 H(+). The protein operates within cofactor biosynthesis; molybdopterin biosynthesis. Functionally, catalytic subunit of the molybdopterin synthase complex, a complex that catalyzes the conversion of precursor Z into molybdopterin. Acts by mediating the incorporation of 2 sulfur atoms from thiocarboxylated Mocs2A into precursor Z to generate a dithiolene group. This Drosophila mojavensis (Fruit fly) protein is Molybdopterin synthase catalytic subunit.